The primary structure comprises 186 residues: Translation initiation factor IF-3 (186 aa).

The disordered stretch occupies residues 1-20; that stretch reads MINRNSGKDRDRSRSGDKEL.

Belongs to the IF-3 family. Monomer.

The protein localises to the cytoplasm. In terms of biological role, IF-3 binds to the 30S ribosomal subunit and shifts the equilibrium between 70S ribosomes and their 50S and 30S subunits in favor of the free subunits, thus enhancing the availability of 30S subunits on which protein synthesis initiation begins. The protein is Translation initiation factor IF-3 of Borrelia duttonii (strain Ly).